We begin with the raw amino-acid sequence, 262 residues long: 5'-nucleotidase SurE (262 aa).

A divalent metal cation contacts are provided by Asp-8, Asp-9, Ser-40, and Asn-92.

The protein belongs to the SurE nucleotidase family. Requires a divalent metal cation as cofactor.

It is found in the cytoplasm. It catalyses the reaction a ribonucleoside 5'-phosphate + H2O = a ribonucleoside + phosphate. Nucleotidase that shows phosphatase activity on nucleoside 5'-monophosphates. In Xylella fastidiosa (strain M23), this protein is 5'-nucleotidase SurE.